The primary structure comprises 593 residues: Potassium channel KAT6 (593 aa).

Topologically, residues methionine 1–arginine 33 are cytoplasmic. The helical transmembrane segment at tryptophan 34 to leucine 54 threads the bilayer. The Extracellular segment spans residues alanine 55–leucine 64. Residues alanine 65–valine 85 traverse the membrane as a helical segment. Residues alanine 86 to histidine 106 are Cytoplasmic-facing. A helical membrane pass occupies residues leucine 107–valine 129. At serine 130–glycine 138 the chain is on the extracellular side. The chain crosses the membrane as a helical; Voltage-sensor span at residues leucine 139–glutamate 159. Topologically, residues lysine 160–lysine 173 are cytoplasmic. A helical membrane pass occupies residues leucine 174 to phenylalanine 194. Residues histidine 195–threonine 221 lie on the Extracellular side of the membrane. The segment at residues cysteine 222–alanine 241 is an intramembrane region (pore-forming). The Extracellular portion of the chain corresponds to alanine 242–methionine 247. The chain crosses the membrane as a helical span at residues leucine 248–isoleucine 268. Topologically, residues threonine 269–tryptophan 593 are cytoplasmic. Leucine 350–tyrosine 470 is a binding site for a nucleoside 3',5'-cyclic phosphate. The 72-residue stretch at arginine 522–tryptophan 593 folds into the KHA domain.

It belongs to the potassium channel family. Plant (TC 1.A.1.4) subfamily.

Its subcellular location is the membrane. In terms of biological role, probable inward-rectifying potassium channel. Assuming opened or closed conformations in response to the voltage difference across the membrane, the channel is activated by hyperpolarization. The chain is Potassium channel KAT6 from Oryza sativa subsp. japonica (Rice).